We begin with the raw amino-acid sequence, 310 residues long: L-lactate dehydrogenase (310 aa).

NAD(+)-binding positions include Val-11, Asp-32, Tyr-62, and Gly-76 to Val-77. Substrate contacts are provided by residues Gln-79, Arg-85, and Asn-117–Asp-120. NAD(+) is bound by residues Ala-115 to Asn-117 and Ser-140. Asp-145–Arg-148 provides a ligand contact to substrate. The beta-D-fructose 1,6-bisphosphate site is built by Arg-150 and His-165. The Proton acceptor role is filled by His-172. Tyr-218 is subject to Phosphotyrosine. Residue Thr-227 participates in substrate binding.

Belongs to the LDH/MDH superfamily. LDH family. As to quaternary structure, homotetramer.

The protein resides in the cytoplasm. It carries out the reaction (S)-lactate + NAD(+) = pyruvate + NADH + H(+). It participates in fermentation; pyruvate fermentation to lactate; (S)-lactate from pyruvate: step 1/1. With respect to regulation, activated by citrate at pH 5. Allosterically activated by fructose 1,6-bisphosphate (FBP) at pH from 5.8 to 7.2. Catalyzes the conversion of lactate to pyruvate. This chain is L-lactate dehydrogenase, found in Thermus aquaticus.